A 293-amino-acid polypeptide reads, in one-letter code: Bifunctional protein FolD (293 aa).

NADP(+) contacts are provided by residues 165–167 (GRS), Ser190, and Ile231.

This sequence belongs to the tetrahydrofolate dehydrogenase/cyclohydrolase family. As to quaternary structure, homodimer.

It catalyses the reaction (6R)-5,10-methylene-5,6,7,8-tetrahydrofolate + NADP(+) = (6R)-5,10-methenyltetrahydrofolate + NADPH. The enzyme catalyses (6R)-5,10-methenyltetrahydrofolate + H2O = (6R)-10-formyltetrahydrofolate + H(+). It functions in the pathway one-carbon metabolism; tetrahydrofolate interconversion. Its function is as follows. Catalyzes the oxidation of 5,10-methylenetetrahydrofolate to 5,10-methenyltetrahydrofolate and then the hydrolysis of 5,10-methenyltetrahydrofolate to 10-formyltetrahydrofolate. This chain is Bifunctional protein FolD, found in Synechococcus sp. (strain CC9902).